A 765-amino-acid chain; its full sequence is Cyanobacterial phytochrome A (765 aa).

The segment at 20–510 (IHLSGQIQPH…RKAIVNIVLR (491 aa)) is chromophore binding domain. Positions 152–320 (NLRDFCQIIV…VIFAEISARE (169 aa)) constitute a GAF domain. Position 259 (C259) interacts with a tetrapyrrole. The 214-residue stretch at 535–748 (VASHDLQEPL…TFYFTIPVGG (214 aa)) folds into the Histidine kinase domain. At H538 the chain carries Phosphohistidine; by autocatalysis.

It in the N-terminal section; belongs to the phytochrome family. Post-translationally, contains one covalently linked tetrapyrrole chromophore.

The catalysed reaction is ATP + protein L-histidine = ADP + protein N-phospho-L-histidine.. Photoreceptor which exists in two forms that are reversibly interconvertible by light: the R form that absorbs maximally in the red region of the spectrum and the FR form that absorbs maximally in the far-red region. The sequence is that of Cyanobacterial phytochrome A (aphA) from Nostoc sp. (strain PCC 7120 / SAG 25.82 / UTEX 2576).